Consider the following 213-residue polypeptide: 3,4-dihydroxy-2-butanone 4-phosphate synthase (213 aa).

Residues 37-38, aspartate 42, 150-154, and glutamate 174 each bind D-ribulose 5-phosphate; these read RE and RSGHT. Glutamate 38 lines the Mg(2+) pocket. A Mg(2+)-binding site is contributed by histidine 153.

This sequence belongs to the DHBP synthase family. In terms of assembly, homodimer. Mg(2+) is required as a cofactor. The cofactor is Mn(2+).

It catalyses the reaction D-ribulose 5-phosphate = (2S)-2-hydroxy-3-oxobutyl phosphate + formate + H(+). The protein operates within cofactor biosynthesis; riboflavin biosynthesis; 2-hydroxy-3-oxobutyl phosphate from D-ribulose 5-phosphate: step 1/1. Its function is as follows. Catalyzes the conversion of D-ribulose 5-phosphate to formate and 3,4-dihydroxy-2-butanone 4-phosphate. The sequence is that of 3,4-dihydroxy-2-butanone 4-phosphate synthase from Blochmanniella floridana.